The following is a 426-amino-acid chain: Serine hydroxymethyltransferase (426 aa).

Residues Leu-121 and 125 to 127 (GHL) contribute to the (6S)-5,6,7,8-tetrahydrofolate site. The residue at position 230 (Lys-230) is an N6-(pyridoxal phosphate)lysine. 354-356 (SPF) is a binding site for (6S)-5,6,7,8-tetrahydrofolate.

The protein belongs to the SHMT family. As to quaternary structure, homodimer. Pyridoxal 5'-phosphate serves as cofactor.

The protein localises to the cytoplasm. The enzyme catalyses (6R)-5,10-methylene-5,6,7,8-tetrahydrofolate + glycine + H2O = (6S)-5,6,7,8-tetrahydrofolate + L-serine. Its pathway is one-carbon metabolism; tetrahydrofolate interconversion. It participates in amino-acid biosynthesis; glycine biosynthesis; glycine from L-serine: step 1/1. Catalyzes the reversible interconversion of serine and glycine with tetrahydrofolate (THF) serving as the one-carbon carrier. This reaction serves as the major source of one-carbon groups required for the biosynthesis of purines, thymidylate, methionine, and other important biomolecules. Also exhibits THF-independent aldolase activity toward beta-hydroxyamino acids, producing glycine and aldehydes, via a retro-aldol mechanism. The sequence is that of Serine hydroxymethyltransferase from Acaryochloris marina (strain MBIC 11017).